The following is a 619-amino-acid chain: Dihydroxy-acid dehydratase 1 (619 aa).

Residue Asp-81 coordinates Mg(2+). Cys-122 is a binding site for [2Fe-2S] cluster. The Mg(2+) site is built by Asp-123 and Lys-124. Position 124 is an N6-carboxylysine (Lys-124). Position 198 (Cys-198) interacts with [2Fe-2S] cluster. Glu-494 serves as a coordination point for Mg(2+). Ser-520 (proton acceptor) is an active-site residue.

The protein belongs to the IlvD/Edd family. Homodimer. Requires [2Fe-2S] cluster as cofactor. Mg(2+) serves as cofactor.

The catalysed reaction is (2R)-2,3-dihydroxy-3-methylbutanoate = 3-methyl-2-oxobutanoate + H2O. It catalyses the reaction (2R,3R)-2,3-dihydroxy-3-methylpentanoate = (S)-3-methyl-2-oxopentanoate + H2O. The protein operates within amino-acid biosynthesis; L-isoleucine biosynthesis; L-isoleucine from 2-oxobutanoate: step 3/4. It functions in the pathway amino-acid biosynthesis; L-valine biosynthesis; L-valine from pyruvate: step 3/4. Functionally, functions in the biosynthesis of branched-chain amino acids. Catalyzes the dehydration of (2R,3R)-2,3-dihydroxy-3-methylpentanoate (2,3-dihydroxy-3-methylvalerate) into 2-oxo-3-methylpentanoate (2-oxo-3-methylvalerate) and of (2R)-2,3-dihydroxy-3-methylbutanoate (2,3-dihydroxyisovalerate) into 2-oxo-3-methylbutanoate (2-oxoisovalerate), the penultimate precursor to L-isoleucine and L-valine, respectively. The chain is Dihydroxy-acid dehydratase 1 from Bordetella bronchiseptica (strain ATCC BAA-588 / NCTC 13252 / RB50) (Alcaligenes bronchisepticus).